Reading from the N-terminus, the 105-residue chain is Large ribosomal subunit protein eL42z/eL42y (105 aa).

Residues 28-57 form a disordered region; the sequence is YKKGKDSLAAQGKRRYDRKQSGYGGQTKPV.

This sequence belongs to the eukaryotic ribosomal protein eL42 family.

The protein is Large ribosomal subunit protein eL42z/eL42y (RPL36AA) of Arabidopsis thaliana (Mouse-ear cress).